We begin with the raw amino-acid sequence, 537 residues long: [Pyruvate dehydrogenase [acetyl-transferring]]-phosphatase 1, mitochondrial (537 aa).

The N-terminal 71 residues, 1 to 71 (MPAPTQLFFP…WWHYTQGRRY (71 aa)), are a transit peptide targeting the mitochondrion. The 417-residue stretch at 109 to 525 (ILGFDSNQLP…DDITIIVVQF (417 aa)) folds into the PPM-type phosphatase domain. Residues Asp-144 and Gly-145 each contribute to the Mn(2+) site. Lys-202 bears the N6-acetyllysine mark. Mn(2+) is bound by residues Asp-418 and Asp-516.

Belongs to the PP2C family. Heterodimer of a catalytic (PDP1) and a regulatory (PDPR) subunit. It depends on Mn(2+) as a cofactor. Requires Mg(2+) as cofactor.

The protein localises to the mitochondrion. It carries out the reaction O-phospho-L-seryl-[pyruvate dehydrogenase E1 alpha subunit] + H2O = L-seryl-[pyruvate dehydrogenase E1 alpha subunit] + phosphate. Its activity is regulated as follows. Magnesium-dependent and calcium-stimulated. PDP1 activity strongly depends on its Ca(2+)-dependent binding to the lipoyl domain of E2 subunit of component of the pyruvate dehydrogenase complex. In terms of biological role, mitochondrial enzyme that catalyzes the dephosphorylation and concomitant reactivation of the alpha subunit of the E1 component of the pyruvate dehydrogenase complex (PDC), thereby stimulating the conversion of pyruvate into acetyl-CoA. The polypeptide is [Pyruvate dehydrogenase [acetyl-transferring]]-phosphatase 1, mitochondrial (PDP1) (Pongo abelii (Sumatran orangutan)).